The chain runs to 420 residues: Argininosuccinate synthase (420 aa).

11 to 19 (AFSGGLDTT) contacts ATP. Tyrosine 88 contacts L-citrulline. Residue glycine 118 coordinates ATP. L-aspartate contacts are provided by threonine 120, asparagine 124, and aspartate 125. Residue asparagine 124 coordinates L-citrulline. Residues arginine 128, serine 174, serine 183, glutamate 257, and tyrosine 269 each coordinate L-citrulline. The interval 401-420 (KGAAVTDGSGDHAASEDTEE) is disordered. Over residues 409–420 (SGDHAASEDTEE) the composition is skewed to basic and acidic residues.

The protein belongs to the argininosuccinate synthase family. Type 1 subfamily. In terms of assembly, homotetramer.

The protein resides in the cytoplasm. It catalyses the reaction L-citrulline + L-aspartate + ATP = 2-(N(omega)-L-arginino)succinate + AMP + diphosphate + H(+). It participates in amino-acid biosynthesis; L-arginine biosynthesis; L-arginine from L-ornithine and carbamoyl phosphate: step 2/3. This is Argininosuccinate synthase from Haloarcula marismortui (strain ATCC 43049 / DSM 3752 / JCM 8966 / VKM B-1809) (Halobacterium marismortui).